The primary structure comprises 88 residues: MARVTVQDAVEKIGNRFDLILTAARRARQLQLNHREPLVPEDNDKPTVIALREIEKGLINNDIMDAQERQDALMQHQAEDAAVSLLTA.

Belongs to the RNA polymerase subunit omega family. In terms of assembly, the RNAP catalytic core consists of 2 alpha, 1 beta, 1 beta' and 1 omega subunit. When a sigma factor is associated with the core the holoenzyme is formed, which can initiate transcription.

It catalyses the reaction RNA(n) + a ribonucleoside 5'-triphosphate = RNA(n+1) + diphosphate. Functionally, promotes RNA polymerase assembly. Latches the N- and C-terminal regions of the beta' subunit thereby facilitating its interaction with the beta and alpha subunits. The sequence is that of DNA-directed RNA polymerase subunit omega from Actinobacillus succinogenes (strain ATCC 55618 / DSM 22257 / CCUG 43843 / 130Z).